We begin with the raw amino-acid sequence, 394 residues long: Elongation factor Tu (394 aa).

Residues 10-204 form the tr-type G domain; that stretch reads KAHVNIGTIG…SVDSYIPTPT (195 aa). Residues 19–26 are G1; that stretch reads GHIDHGKT. A GTP-binding site is contributed by 19–26; the sequence is GHIDHGKT. Residue T26 coordinates Mg(2+). Residues 60-64 form a G2 region; the sequence is GITIN. Residues 81–84 are G3; it reads DCPG. GTP contacts are provided by residues 81–85 and 136–139; these read DCPGH and NKCD. Residues 136 to 139 are G4; it reads NKCD. The segment at 174–176 is G5; it reads SAL.

The protein belongs to the TRAFAC class translation factor GTPase superfamily. Classic translation factor GTPase family. EF-Tu/EF-1A subfamily. Monomer.

It is found in the cytoplasm. The catalysed reaction is GTP + H2O = GDP + phosphate + H(+). In terms of biological role, GTP hydrolase that promotes the GTP-dependent binding of aminoacyl-tRNA to the A-site of ribosomes during protein biosynthesis. The chain is Elongation factor Tu from Malacoplasma penetrans (strain HF-2) (Mycoplasma penetrans).